A 1098-amino-acid polypeptide reads, in one-letter code: Mediator of RNA polymerase II transcription subunit 5 (1098 aa).

The disordered stretch occupies residues 1019-1041 (PDDVQKSADMKPDTGIKEDDSEK). The span at 1021–1041 (DVQKSADMKPDTGIKEDDSEK) shows a compositional bias: basic and acidic residues.

It belongs to the Mediator complex subunit 5 family. As to quaternary structure, component of the Mediator complex.

It is found in the nucleus. Functionally, component of the Mediator complex, a coactivator involved in the regulated transcription of nearly all RNA polymerase II-dependent genes. Mediator functions as a bridge to convey information from gene-specific regulatory proteins to the basal RNA polymerase II transcription machinery. Mediator is recruited to promoters by direct interactions with regulatory proteins and serves as a scaffold for the assembly of a functional preinitiation complex with RNA polymerase II and the general transcription factors. This Eremothecium gossypii (strain ATCC 10895 / CBS 109.51 / FGSC 9923 / NRRL Y-1056) (Yeast) protein is Mediator of RNA polymerase II transcription subunit 5 (NUT1).